A 480-amino-acid chain; its full sequence is Proline--tRNA ligase (480 aa).

Belongs to the class-II aminoacyl-tRNA synthetase family. ProS type 3 subfamily. As to quaternary structure, homodimer.

Its subcellular location is the cytoplasm. The enzyme catalyses tRNA(Pro) + L-proline + ATP = L-prolyl-tRNA(Pro) + AMP + diphosphate. Catalyzes the attachment of proline to tRNA(Pro) in a two-step reaction: proline is first activated by ATP to form Pro-AMP and then transferred to the acceptor end of tRNA(Pro). This chain is Proline--tRNA ligase, found in Pyrococcus horikoshii (strain ATCC 700860 / DSM 12428 / JCM 9974 / NBRC 100139 / OT-3).